Reading from the N-terminus, the 379-residue chain is MKYSTIFSAAAAVFAGSAAAVGVSGSAEGFAEGVTGGGDATPVYPDTIDELVSYLGDDEARVIVLTKTFDFTDSEGTTTGTGCAPWGTASACQVAIDQDDWCENYEPDAPSISVEYYNAGVLGITVTSNKSLIGEGSSGAIKGKGLRIVSGAENIIIQNIAVTDINPKYVWGGDAITLDDCDLVWIDHVTTARIGRQHYVLGTSADNRVSLTNNYIDGVSDYSATCDGYHYWGIYLDGDADLVTMKGNYIYHTSGRSPKVQDNTLLHCVNNYFYDISGHAFEIGEGGYVLAEGNVFQNVDTVLETYEGAAFTVPSTTAGEVCSTYLGRDCVINGFGSSGTFSEDSTSFLSDFEGKNIASASAYTSVASSVVANAGQGNL.

The signal sequence occupies residues 1–20; that stretch reads MKYSTIFSAAAAVFAGSAAA. 2 disulfides stabilise this stretch: cysteine 83-cysteine 102 and cysteine 92-cysteine 226. A glycan (N-linked (GlcNAc...) asparagine) is linked at asparagine 129. Residue arginine 256 is part of the active site. A disulfide bond links cysteine 322 and cysteine 330.

The protein belongs to the polysaccharide lyase 1 family.

It localises to the secreted. It carries out the reaction Eliminative cleavage of (1-&gt;4)-alpha-D-galacturonan methyl ester to give oligosaccharides with 4-deoxy-6-O-methyl-alpha-D-galact-4-enuronosyl groups at their non-reducing ends.. Its function is as follows. Pectinolytic enzymes consist of four classes of enzymes: pectin lyase, polygalacturonase, pectin methylesterase and rhamnogalacturonase. Among pectinolytic enzymes, pectin lyase is the most important in depolymerization of pectin, since it cleaves internal glycosidic bonds of highly methylated pectins. This Aspergillus niger (strain ATCC MYA-4892 / CBS 513.88 / FGSC A1513) protein is Probable pectin lyase A (pelA).